Reading from the N-terminus, the 566-residue chain is Chondroitin sulfate proteoglycan 5 (566 aa).

Positions 1–30 are cleaved as a signal peptide; that stretch reads MGRAGGGGPGRGPPPLLLFLGAALVLASGA. The Extracellular portion of the chain corresponds to 31–423; it reads VPAREAGSAV…SIITDFQVMC (393 aa). A glycan (O-linked (Xyl...) (chondroitin sulfate) serine) is linked at Ser-38. Residues 39–82 are disordered; the sequence is AVEAEELVKGSPAWEPPANDTREEAGPPAAGEDEASWTAPGGEL. Asn-57 carries N-linked (GlcNAc...) asparagine glycosylation. A glycan (O-linked (Xyl...) (chondroitin sulfate) serine) is linked at Ser-117. Disordered stretches follow at residues 143–202, 215–248, and 262–354; these read IPEA…LEPQ, GLDG…TPSW, and ESDF…ASSE. O-linked (GalNAc...) serine glycosylation occurs at Ser-165. Residues 264-301 form an interaction with TNC and TNR region; the sequence is DFYPTTSFYDDLDEEEEEEEDDKDAVGGGDLEDENELL. Residues 273 to 286 are compositionally biased toward acidic residues; that stretch reads DDLDEEEEEEEDDK. In terms of domain architecture, EGF-like spans 371–413; that stretch reads RSVCDLFPSYCHNGGQCYLVENIGAFCRCNTQDYIWHKGMRCE. Intrachain disulfides connect Cys-374/Cys-387, Cys-381/Cys-397, and Cys-399/Cys-412. The chain crosses the membrane as a helical span at residues 424-444; that stretch reads VAVGSAALVLLLLFMMTVFFA. Residues 442–460 are interaction with GOPC; the sequence is FFAKKLYLLKTENTKLRRT. Over 445-566 the chain is Cytoplasmic; sequence KKLYLLKTEN…DVNCLQNNLT (122 aa). Phosphoserine is present on residues Ser-467, Ser-475, Ser-483, and Ser-543.

Binds TNR and probably TNC. Interacts with ERBB3 and GOPC. Interacts with MDK; this interaction is independent of the presence of chondroitin sulfate chains and promotes elongation of oligodendroglial precursor-like cells. In terms of processing, N-glycosylated. O-glycosylated; contains chondroitin sulfate glycans. Part-time proteoglycan, expressed in part as a proteoglycan exhibiting chondroitin sulfate glycans and in part as a non-proteoglycan form. The relative amount of both forms depends on tissues and tissue maturation. Post-translationally, phosphorylated; in intracellular and extracellular parts. Detected in cerebrospinal fluid (at protein level). Detected in urine (at protein level). Expressed in brain (at protein level).

The protein resides in the cell membrane. Its subcellular location is the synaptic cell membrane. It localises to the endoplasmic reticulum membrane. It is found in the golgi apparatus membrane. The protein localises to the cell surface. The protein resides in the secreted. In terms of biological role, may function as a growth and differentiation factor involved in neuritogenesis. May induce ERBB3 activation. The protein is Chondroitin sulfate proteoglycan 5 (CSPG5) of Homo sapiens (Human).